Consider the following 440-residue polypeptide: Tetratricopeptide repeat protein 5 (440 aa).

TPR repeat units lie at residues 7–61 (EEAK…EEVL), 68–98 (AQAL…AVKL), 103–130 (VEAW…SGAL), 136–174 (KVSL…AVQM), and 179–216 (GRSW…AEKV). The Nuclear export signal motif lies at 13–24 (LQKLQGLVDRLY). Position 203 is a phosphoserine; by ATM (Ser-203). The residue at position 221 (Ser-221) is a Phosphoserine; by CHEK2. The TPR 6 repeat unit spans residues 224 to 253 (PDLHLNRATLHKYEESYGEALEGFSQAAAL). Residues 285 to 287 (KPK) are mediates interaction with 28S rRNA of ribosome-coding tubulin.

In terms of assembly, interacts with JMY and p300/EP300; the interaction occurs in the nucleus and augments the association between JMY and p300/EP300 in response to DNA damage. Interacts with PRMT5; the interaction is DNA damage-dependent and promotes PRMT5 interaction with p53/TP53 and subsequent methylation. Forms a complex with HSF1 and p300/EP300; these interactions augment chromatin-bound HSF1 and p300/EP300 histone acetyltransferase activity, resulting in enhanced heat-shock-responsive transcription. Interacts with JMY; the interaction occurs in the cytoplasm and results in the inhibition of JYM's nucleation activity. Interacts with ribosome-coding tubulin (via 60S subunit 28S rRNA and protein uL24/RPL26) and the N-terminal of nascent tubulin polypeptide (via alpha-tubulin MREC motif and beta-tubulin MREI motif); these interactions result in tubulin mRNA-targeted degradation. Interacts with ATP5F1B; the interaction occurs in the mitochondria and results in ATP production decrease. Interacts with p53/TP53; the interaction occurs in the mitochondria and results in increased apoptosis. Phosphorylation by ATM kinase induces nuclear accumulation while interfering with nuclear export, and phosphorylation by CHEK2 kinase enhances nuclear stability. In terms of tissue distribution, expressed in heart, brain, spleen, lung, liver, skeletal muscle, kidney and testis.

Its subcellular location is the nucleus. It localises to the cytoplasm. The protein resides in the cytoplasmic vesicle. It is found in the mitochondrion matrix. Its function is as follows. Cofactor involved in the regulation of various cellular mechanisms such as actin regulation, autophagy, chromatin regulation and DNA repair. In physiological conditions, interacts with cofactor JMY in the cytoplasm which prevents JMY's actin nucleation activity and ability to activate the Arp2/3 complex. Acts as a negative regulator of nutrient stress-induced autophagy by inhibiting JMY's interaction with MAP1LC3B, thereby preventing autophagosome formation. Involves in tubulin autoregulation by promoting its degradation in response to excess soluble tubulin. To do so, associates with the active ribosome near the ribosome exit tunnel and with nascent tubulin polypeptides early during their translation, triggering tubulin mRNA-targeted degradation. Following DNA damage, phosphorylated by DNA damage responsive protein kinases ATM and CHEK2, leading to its nuclear accumulation and stability. Nuclear TTC5/STRAP promotes the assembly of a stress-responsive p53/TP53 coactivator complex, which includes the coactivators JMY and p300, thereby increasing p53/TP53-dependent transcription and apoptosis. Also recruits arginine methyltransferase PRMT5 to p53/TP53 when DNA is damaged, allowing PRMT5 to methylate p53/TP53. In DNA stress conditions, also prevents p53/TP53 degradation by E3 ubiquitin ligase MDM2. Upon heat-shock stress, forms a chromatin-associated complex with heat-shock factor 1 HSF1 and p300/EP300 to stimulate heat-shock-responsive transcription, thereby increasing cell survival. Mitochondrial TTC5/STRAP interacts with ATP synthase subunit beta ATP5F1B which decreased ATP synthase activity and lowers mitochondrial ATP production, thereby regulating cellular respiration and mitochondrial-dependent apoptosis. Mitochondrial TTC5/STRAP also regulates p53/TP53-mediated apoptosis. The chain is Tetratricopeptide repeat protein 5 from Mus musculus (Mouse).